The chain runs to 181 residues: MKLLFDFFPIVLFFIVYKFFGIYTATAVAMVASLTQVAFYRLKFQHYEKMHLFSLAIIMVLGGATLFFQNPWFIKWKPTGIYWLSALVFYGSSYIGSKPLIQKMMEANINLTTKIWYRLNLAWTLFFIVMGALNLYVAYHYDTDVWVNFKLFGGVGFTLLFVLIQAFYLTKHTDEKSFEKQ.

A run of 5 helical transmembrane segments spans residues 3–23 (LLFD…FGIY), 54–74 (SLAI…PWFI), 81–101 (IYWL…KPLI), 119–139 (LNLA…YVAY), and 149–169 (FKLF…AFYL).

This sequence belongs to the YciB family.

The protein resides in the cell inner membrane. Its function is as follows. Plays a role in cell envelope biogenesis, maintenance of cell envelope integrity and membrane homeostasis. This chain is Inner membrane-spanning protein YciB, found in Legionella pneumophila subsp. pneumophila (strain Philadelphia 1 / ATCC 33152 / DSM 7513).